The following is a 254-amino-acid chain: Indole-3-glycerol phosphate synthase (254 aa).

This sequence belongs to the TrpC family.

It carries out the reaction 1-(2-carboxyphenylamino)-1-deoxy-D-ribulose 5-phosphate + H(+) = (1S,2R)-1-C-(indol-3-yl)glycerol 3-phosphate + CO2 + H2O. The protein operates within amino-acid biosynthesis; L-tryptophan biosynthesis; L-tryptophan from chorismate: step 4/5. The polypeptide is Indole-3-glycerol phosphate synthase (Methanopyrus kandleri (strain AV19 / DSM 6324 / JCM 9639 / NBRC 100938)).